The chain runs to 436 residues: MMKCSFFRAILVAVGLMAAAVVATPANALVTLDIRKGNVQPMPIAITDFLQGDMGAQVSQVIAADLQRSGLFAPINKSAFIEKISNPDASPRFEDWKVINAQALVTGRVTQEADGRLRAEFRLWDPFAGQQMTGQQFYTQPENWRRVAHIIADAIYKQITGEEGYFDTRVVFVSESGTKQQRKRQLAIMDQDGFNVRMLTDGSDLVLTPRFSPNRQEVTYMSFANQQPRVYLLQLETGQREVVGNFPGMTFSPRFSPDGQKVIMSLQQEGNSNIYTMDLRSRTTTRLTSTAAIDTSPSYSPDGARVSFESDRGGKPQIYVMNADGSGQTRISFGDGSYSTPVWSPRGDLIAFTKQAGGKFSIGVMKPDGSGERILTTGFHNEGPTWAPNGRVLMFFRQAAGAGGPQLYSIDLTGYNEQLVKTPSYGSDPAWSPLLE.

The first 28 residues, 1 to 28 (MMKCSFFRAILVAVGLMAAAVVATPANA), serve as a signal peptide directing secretion.

Belongs to the TolB family. As to quaternary structure, the Tol-Pal system is composed of five core proteins: the inner membrane proteins TolA, TolQ and TolR, the periplasmic protein TolB and the outer membrane protein Pal. They form a network linking the inner and outer membranes and the peptidoglycan layer.

It is found in the periplasm. In terms of biological role, part of the Tol-Pal system, which plays a role in outer membrane invagination during cell division and is important for maintaining outer membrane integrity. The protein is Tol-Pal system protein TolB of Rhizobium etli (strain CIAT 652).